A 440-amino-acid chain; its full sequence is Xylose isomerase (440 aa).

2 residues coordinate Mg(2+): Asp307 and Asp309.

This sequence belongs to the xylose isomerase family. As to quaternary structure, homotetramer. It depends on Mg(2+) as a cofactor.

The protein localises to the cytoplasm. It carries out the reaction alpha-D-xylose = alpha-D-xylulofuranose. The protein is Xylose isomerase of Escherichia coli (strain K12 / MC4100 / BW2952).